The sequence spans 260 residues: Hemin import ATP-binding protein HmuV (260 aa).

Residues 2–239 (IRAENITLIR…ETIARVYGIG (238 aa)) form the ABC transporter domain. Residue 34-41 (GPNGAGKS) participates in ATP binding.

It belongs to the ABC transporter superfamily. Heme (hemin) importer (TC 3.A.1.14.5) family. The complex is composed of two ATP-binding proteins (HmuV), two transmembrane proteins (HmuU) and a solute-binding protein (HmuT).

It localises to the cell inner membrane. Part of the ABC transporter complex HmuTUV involved in hemin import. Responsible for energy coupling to the transport system. This chain is Hemin import ATP-binding protein HmuV, found in Agrobacterium fabrum (strain C58 / ATCC 33970) (Agrobacterium tumefaciens (strain C58)).